Here is a 742-residue protein sequence, read N- to C-terminus: Polyphosphate kinase (742 aa).

Residue asparagine 91 participates in ATP binding. The Mg(2+) site is built by arginine 431 and arginine 461. Histidine 491 (phosphohistidine intermediate) is an active-site residue. Positions 524, 624, and 652 each coordinate ATP. The disordered stretch occupies residues 718–742; that stretch reads WTASPQEGHSVRDHQESLMERHRSP. A compositionally biased stretch (basic and acidic residues) spans 726 to 742; that stretch reads HSVRDHQESLMERHRSP.

It belongs to the polyphosphate kinase 1 (PPK1) family. Mg(2+) serves as cofactor. An intermediate of this reaction is the autophosphorylated ppk in which a phosphate is covalently linked to a histidine residue through a N-P bond.

It carries out the reaction [phosphate](n) + ATP = [phosphate](n+1) + ADP. Functionally, catalyzes the reversible transfer of the terminal phosphate of ATP to form a long-chain polyphosphate (polyP). This is Polyphosphate kinase from Mycobacterium bovis (strain ATCC BAA-935 / AF2122/97).